A 473-amino-acid polypeptide reads, in one-letter code: Phenolic acid decarboxylase (473 aa).

Residues N160, H182, and E224 each contribute to the Mn(2+) site. Residues 160–165 (NVGIYR) and 181–182 (QH) each bind prenylated FMN. The Proton donor role is filled by E273.

It belongs to the UbiD family. YclC subfamily. The cofactor is prenylated FMN. Requires Mn(2+) as cofactor.

It catalyses the reaction 4-hydroxybenzoate + H(+) = phenol + CO2. The catalysed reaction is vanillate + H(+) = guaiacol + CO2. Involved in the non-oxidative decarboxylation and detoxification of phenolic derivatives under both aerobic and anaerobic conditions. Phenolic acid decarboxylase that catalyzes the reversible decarboxylation of 4-hydroxybenzoate and vanillate. Could also catalyze the decarboxylation of salicylate. Is not active on di- and tri-hydroxybenzoate derivatives. This chain is Phenolic acid decarboxylase, found in Bacillus subtilis (strain 168).